We begin with the raw amino-acid sequence, 393 residues long: tRNA (guanine-N(7)-)-methyltransferase (393 aa).

S-adenosyl-L-methionine contacts are provided by Glu124, Glu149, and Asp176. A substrate-binding site is contributed by Asp232.

It belongs to the class I-like SAM-binding methyltransferase superfamily. TrmB family.

It catalyses the reaction guanosine(46) in tRNA + S-adenosyl-L-methionine = N(7)-methylguanosine(46) in tRNA + S-adenosyl-L-homocysteine. It functions in the pathway tRNA modification; N(7)-methylguanine-tRNA biosynthesis. Functionally, catalyzes the formation of N(7)-methylguanine at position 46 (m7G46) in tRNA. In Helicobacter pylori (strain HPAG1), this protein is tRNA (guanine-N(7)-)-methyltransferase.